The sequence spans 59 residues: Early growth response protein 1 (59 aa).

3 consecutive C2H2-type zinc fingers follow at residues 1-18, 24-46, and 52-59; these read CDRR…IRIH, FQCR…IRTH, and FACDICGR.

Belongs to the EGR C2H2-type zinc-finger protein family.

Its subcellular location is the nucleus. The protein resides in the cytoplasm. Its function is as follows. Transcriptional regulator. Recognizes and binds to the DNA sequence 5'-GCG(T/G)GGGCG-3'(EGR-site) in the promoter region of target genes. Binds double-stranded target DNA, irrespective of the cytosine methylation status. Regulates the transcription of numerous target genes, and thereby plays an important role in regulating the response to growth factors, DNA damage, and ischemia. Plays a role in the regulation of cell survival, proliferation and cell death. Mediates responses to ischemia and hypoxia; regulates the expression of proteins that are involved in inflammatory processes. Plays a role in regulating the expression of circadian clock genes. The chain is Early growth response protein 1 (EGR1) from Serinus canaria (Island canary).